A 780-amino-acid chain; its full sequence is Catenin beta-1 (780 aa).

Residues 34-56 (GIHSGATTTAPSLSGKGNPEDDD) form a disordered region. ARM repeat units follow at residues 140-179 (NYQD…QLSK), 224-263 (REGL…NLLL), 266-305 (EGAK…ILAY), 350-389 (SSNK…NLSD), 399-430 (GLLG…TCNN), 431-472 (YKNK…HLTS), 478-518 (EMAQ…NLAL), 520-561 (PANH…QFVE), 583-622 (IHNR…ELAQ), and 624-663 (KEAA…RMSE). A compositionally biased stretch (basic and acidic residues) spans 735–744 (EHEMAGHHPG). A disordered region spans residues 735–770 (EHEMAGHHPGPDYPVDGLPDLGHTQDLIDGLPPGDS).

It belongs to the beta-catenin family. In terms of assembly, interacts with adnpa. Interacts with cdh1 during oogenesis and in the unfertilized egg. Interacts with ctnna1 and cdh2. Post-translationally, phosphorylation by gsk3b promotes ubiquitination and subsequent degradation by the proteasome. In terms of processing, ubiquitinated when phosphorylated by gsk3b, leading to its degradation. As to expression, expressed in the successional lamina, also expressed in both the epithelial and mesenchymal cells of the developing replacement tooth (at protein level). Expressed in the enamel organ as well as in the inner and outer dental epithelium during replacement tooth morphogenesis (at protein level). Expressed in the differentiated, polarized odontoblasts that line the dentine matrix as well as in the inner and outer dental epithelium during tooth cytodifferentiation (at protein level). Expressed in the reduced enamel organ, odontoblasts and weakly at the center of the dental papilla of the functional tooth as well as in the epithelial crypts surrounding the functional tooth (at protein level). Expressed in the liver (at protein level). Expressed at intercalated disks in the heart (at protein level). Expressed in the ovary.

It is found in the cytoplasm. The protein localises to the nucleus. The protein resides in the cell membrane. Its subcellular location is the cell junction. It localises to the adherens junction. In terms of biological role, key downstream component of the canonical Wnt signaling pathway. In the absence of Wnt, forms a complex with axin1, axin2, apc, csnk1a1 and gsk3b that promotes phosphorylation on N-terminal Ser and Thr residues and ubiquitination of ctnnb1 and its subsequent degradation by the proteasome. In the presence of Wnt ligand, ctnnb1 is not ubiquitinated and accumulates in the nucleus, where it acts as a coactivator for transcription factors of the TCF/LEF family, leading to activate Wnt responsive genes. Plays a key role in dorsoventral patterning: in prospective ventral blastomeres, its down-regulation by axin1 and axin2 leads to inhibit the Wnt signaling pathway, while in prospective dorsal blastomeres, degradation of axin results in stabilization and nuclear translocation of ctnnb1. This is Catenin beta-1 from Danio rerio (Zebrafish).